Consider the following 334-residue polypeptide: Protein-methionine-sulfoxide reductase catalytic subunit MsrP (334 aa).

The segment at residues 1–44 (MKKNQFLKESDVTAESVFFMKRRQVLKALGISAAALSLPHAAHA) is a signal peptide (tat-type signal). Residues Asn-88, 91–92 (YE), Cys-146, Thr-181, Asn-233, Arg-238, and 249–251 (GIK) each bind Mo-molybdopterin.

This sequence belongs to the MsrP family. As to quaternary structure, heterodimer of a catalytic subunit (MsrP) and a heme-binding subunit (MsrQ). The cofactor is Mo-molybdopterin. Predicted to be exported by the Tat system. The position of the signal peptide cleavage has not been experimentally proven.

The protein localises to the periplasm. The catalysed reaction is L-methionyl-[protein] + a quinone + H2O = L-methionyl-(S)-S-oxide-[protein] + a quinol. The enzyme catalyses L-methionyl-[protein] + a quinone + H2O = L-methionyl-(R)-S-oxide-[protein] + a quinol. Its function is as follows. Part of the MsrPQ system that repairs oxidized periplasmic proteins containing methionine sulfoxide residues (Met-O), using respiratory chain electrons. Thus protects these proteins from oxidative-stress damage caused by reactive species of oxygen and chlorine generated by the host defense mechanisms. MsrPQ is essential for the maintenance of envelope integrity under bleach stress, rescuing a wide series of structurally unrelated periplasmic proteins from methionine oxidation, including the primary periplasmic chaperone SurA and the lipoprotein Pal. The catalytic subunit MsrP is non-stereospecific, being able to reduce both (R-) and (S-) diastereoisomers of methionine sulfoxide. This Shigella boydii serotype 18 (strain CDC 3083-94 / BS512) protein is Protein-methionine-sulfoxide reductase catalytic subunit MsrP.